Consider the following 42-residue polypeptide: Photosystem I reaction center subunit IX (42 aa).

Residues 8 to 28 (YLSTAPVLLTIWLSFTAALVI) traverse the membrane as a helical segment.

This sequence belongs to the PsaJ family.

Its subcellular location is the plastid. It is found in the chloroplast thylakoid membrane. Its function is as follows. May help in the organization of the PsaE and PsaF subunits. This chain is Photosystem I reaction center subunit IX, found in Guillardia theta (Cryptophyte).